The primary structure comprises 893 residues: DNA gyrase subunit A (893 aa).

One can recognise a Topo IIA-type catalytic domain in the interval 35–501; it reads LPDVRDGLKP…GLEDLEDEDL (467 aa). The O-(5'-phospho-DNA)-tyrosine intermediate role is filled by Tyr123. A GyrA-box motif is present at residues 528–534; the sequence is QNRGGRG. The segment at 810–893 is disordered; the sequence is VNEEDDNEEN…ASDNEEDSDE (84 aa). Acidic residues-rich tracts occupy residues 812-821 and 852-862; these read EEDDNEENAD and DAEMESVESPE. Basic and acidic residues predominate over residues 863–879; sequence NDDRIDIRQDFMDRVNE. A compositionally biased stretch (acidic residues) spans 880 to 893; sequence DIESASDNEEDSDE.

The protein belongs to the type II topoisomerase GyrA/ParC subunit family. As to quaternary structure, heterotetramer, composed of two GyrA and two GyrB chains. In the heterotetramer, GyrA contains the active site tyrosine that forms a transient covalent intermediate with DNA, while GyrB binds cofactors and catalyzes ATP hydrolysis.

The protein localises to the cytoplasm. The catalysed reaction is ATP-dependent breakage, passage and rejoining of double-stranded DNA.. In terms of biological role, a type II topoisomerase that negatively supercoils closed circular double-stranded (ds) DNA in an ATP-dependent manner to modulate DNA topology and maintain chromosomes in an underwound state. Negative supercoiling favors strand separation, and DNA replication, transcription, recombination and repair, all of which involve strand separation. Also able to catalyze the interconversion of other topological isomers of dsDNA rings, including catenanes and knotted rings. Type II topoisomerases break and join 2 DNA strands simultaneously in an ATP-dependent manner. This is DNA gyrase subunit A from Staphylococcus epidermidis (strain ATCC 35984 / DSM 28319 / BCRC 17069 / CCUG 31568 / BM 3577 / RP62A).